The primary structure comprises 61 residues: Large ribosomal subunit protein bL28 (61 aa).

This sequence belongs to the bacterial ribosomal protein bL28 family.

This Lachnospira eligens (strain ATCC 27750 / DSM 3376 / VPI C15-48 / C15-B4) (Eubacterium eligens) protein is Large ribosomal subunit protein bL28.